The primary structure comprises 251 residues: Zinc import ATP-binding protein ZnuC (251 aa).

In terms of domain architecture, ABC transporter spans 5-220; sequence VSLENVSVSF…PEFISMFGPR (216 aa). 37 to 44 provides a ligand contact to ATP; sequence GPNGAGKS.

It belongs to the ABC transporter superfamily. Zinc importer (TC 3.A.1.15.5) family. As to quaternary structure, the complex is composed of two ATP-binding proteins (ZnuC), two transmembrane proteins (ZnuB) and a solute-binding protein (ZnuA).

The protein resides in the cell inner membrane. It carries out the reaction Zn(2+)(out) + ATP(in) + H2O(in) = Zn(2+)(in) + ADP(in) + phosphate(in) + H(+)(in). In terms of biological role, part of the ABC transporter complex ZnuABC involved in zinc import. Responsible for energy coupling to the transport system. In Escherichia coli O157:H7, this protein is Zinc import ATP-binding protein ZnuC.